The sequence spans 201 residues: Recombination protein RecR (201 aa).

The C4-type zinc finger occupies 57–72; that stretch reads CKSCRTFTEEDECAIC. The Toprim domain occupies 81–176; sequence GQLCVVEMPA…KVTRIAHGIP (96 aa).

It belongs to the RecR family.

Functionally, may play a role in DNA repair. It seems to be involved in an RecBC-independent recombinational process of DNA repair. It may act with RecF and RecO. The protein is Recombination protein RecR of Glaesserella parasuis serovar 5 (strain SH0165) (Haemophilus parasuis).